Consider the following 125-residue polypeptide: uncharacterized protein (125 aa).

Positions Met-1 to Ala-21 are cleaved as a signal peptide. Residues Lys-54–Ser-102 are a coiled coil. Residues Tyr-96–Lys-125 form a disordered region. Positions Glu-108 to Lys-125 are enriched in basic and acidic residues.

This is an uncharacterized protein from Rickettsia bellii (strain RML369-C).